A 711-amino-acid chain; its full sequence is Ferric reductase transmembrane component 3 (711 aa).

An N-terminal signal peptide occupies residues 1 to 20; the sequence is MYWVLLCGSILLCCLSGASA. At 21–166 the chain is on the extracellular side; it reads SPAKTKMYGK…YANYDIGHTY (146 aa). 4 N-linked (GlcNAc...) asparagine glycosylation sites follow: Asn85, Asn108, Asn120, and Asn134. Residues 167 to 187 form a helical membrane-spanning segment; the sequence is GGIICAYFVGVMILASILHYL. Topologically, residues 188-237 are cytoplasmic; it reads SYTPFKTALFKQRLVRYVRRYLTIPTIWGKHASSFSYLKIFTGFLPTRSE. The helical transmembrane segment at 238–258 threads the bilayer; it reads GVIILGYLVLHTVFLAYGYQY. Residues 259–280 are Extracellular-facing; sequence DPYNLIFDSRREQIARYVADRS. In terms of domain architecture, Ferric oxidoreductase spans 280 to 414; the sequence is SGVLAFAHFP…SGIEWIYAAI (135 aa). The helical transmembrane segment at 281-301 threads the bilayer; it reads GVLAFAHFPLIALFAGRNNFL. Topologically, residues 302 to 321 are cytoplasmic; that stretch reads EFISGVKYTSFIMFHKWLGR. 2 residues coordinate heme: His316 and His330. The chain crosses the membrane as a helical span at residues 322 to 341; the sequence is MMFLDAVIHGAAYTSYSVFY. The Extracellular portion of the chain corresponds to 342 to 353; that stretch reads KDWAASKEETYW. A helical transmembrane segment spans residues 354–374; sequence QFGVAALCIVGVMVFFSLAMF. At 375 to 376 the chain is on the cytoplasmic side; it reads RK. Residues 377 to 397 traverse the membrane as a helical segment; it reads FFYEAFLFLHIVLGALFFYTC. His386 contacts heme. Position 398 (Trp398) is a topological domain, extracellular. Residues 399–419 form a helical membrane-spanning segment; the sequence is EHVVELSGIEWIYAAIAIWTI. Heme is bound at residue His400. The FAD-binding FR-type domain occupies 415-534; the sequence is AIWTIDRLIR…EGPYGSSSPV (120 aa). At 420–711 the chain is on the cytoplasmic side; the sequence is DRLIRIVRVS…IEYFEEYQSW (292 aa). Residue 479 to 485 coordinates FAD; that stretch reads HPFTVLD. NADP(+) is bound by residues 526–529 and 677–678; these read GPYG and CG.

This sequence belongs to the ferric reductase (FRE) family. Requires FAD as cofactor. Heme serves as cofactor.

It is found in the cell membrane. The catalysed reaction is 2 a Fe(II)-siderophore + NADP(+) + H(+) = 2 a Fe(III)-siderophore + NADPH. Siderophore-iron reductase responsible for reducing extracellular iron prior to import. Catalyzes the reductive uptake of Fe(3+) bound to di- and trihydroxamate siderophores. Fe(3+) is reduced to Fe(2+), which then dissociates from the siderophore and can be imported by the high-affinity Fe(2+) transport complex in the plasma membrane. This Saccharomyces cerevisiae (strain ATCC 204508 / S288c) (Baker's yeast) protein is Ferric reductase transmembrane component 3 (FRE3).